The primary structure comprises 82 residues: Omega-conotoxin-like Am6.2 (82 aa).

The N-terminal stretch at 1–22 (MKLTCMMIVAVLFLTAWTFVTA) is a signal peptide. Positions 23 to 52 (VPHSSNVLENLYLKARHEMENQEASKLNMR) are excised as a propeptide. 3 disulfide bridges follow: Cys56–Cys73, Cys63–Cys77, and Cys72–Cys81. A 6'-bromotryptophan; partial; in Am6.2b (major form) modification is found at Trp76.

This sequence belongs to the conotoxin O1 family. Mostly non-hydroxylated. Post-translationally, two forms of this peptides have been described. Am6.2a (Am3136) is not unmodified, while Am6.2b (Am3214) is Trp-76 brominated. Both forms are found in venom with a much more abundant brominated form. In terms of tissue distribution, expressed by the venom duct.

The protein resides in the secreted. Functionally, omega-conotoxins act at presynaptic membranes, they bind and block voltage-gated calcium channels (Cav). This is Omega-conotoxin-like Am6.2 from Conus amadis (Amadis cone).